Here is a 467-residue protein sequence, read N- to C-terminus: Palmitoyltransferase ZDHHC18-A (467 aa).

At 1 to 59 the chain is on the cytoplasmic side; it reads MKNCEYQQIDPRALRTPSSRTSSTLPCGRKGSQRLRRKWEVFPGKNRFYCDGRIMLARQ. Residues 60–80 form a helical membrane-spanning segment; the sequence is CGVLPLTIGLIFITSVLFFTF. The Lumenal portion of the chain corresponds to 81-88; sequence DCPFLVDH. Residues 89-109 traverse the membrane as a helical segment; that stretch reads LTVFIPVIGGVLFIFVVISLL. Residues 110–204 lie on the Cytoplasmic side of the membrane; sequence QTSFTDPGIL…GNCVGKRNYR (95 aa). One can recognise a DHHC domain in the interval 161 to 211; that stretch reads KYCFTCKMFRPPRTSHCSLCDNCVERFDHHCPWVGNCVGKRNYRFFYAFIV. The active-site S-palmitoyl cysteine intermediate is the Cys-191. Residues 205 to 225 form a helical membrane-spanning segment; it reads FFYAFIVSLSFLTSFIFGCVI. The Lumenal segment spans residues 226-247; sequence THLTLRSQGGNGFIQAIQDSPA. Residues 248–268 traverse the membrane as a helical segment; the sequence is SVVELVICFFSIWSILGLSGF. Over 269 to 467 the chain is Cytoplasmic; that stretch reads HTYLVASNLT…APDMGFIPLN (199 aa).

It belongs to the DHHC palmitoyltransferase family. ERF2/ZDHHC9 subfamily.

It is found in the golgi apparatus membrane. It catalyses the reaction L-cysteinyl-[protein] + hexadecanoyl-CoA = S-hexadecanoyl-L-cysteinyl-[protein] + CoA. Palmitoyltransferase that catalyzes the addition of palmitate onto various protein substrates, such as CGAS, HRAS and LCK. The sequence is that of Palmitoyltransferase ZDHHC18-A from Danio rerio (Zebrafish).